A 315-amino-acid chain; its full sequence is Putative ankyrin repeat protein R600 (315 aa).

ANK repeat units lie at residues 79–108, 118–152, 153–182, 184–211, and 212–240; these read NECRYFRMAVYNNSYDIAKYLLENGANVHV, SGFGKFYVFHSEKKEKRDTVELVKLLIDYNAMVGT, DTCNLVHTAIDANRLDVVKILVENGADIFS, QSKLLKSAVMYNYDILEYLISQGIDVTD, and DNNSVLKFAVSRGYDCVDLLLDAGADMNT.

This is Putative ankyrin repeat protein R600 from Acanthamoeba polyphaga mimivirus (APMV).